Reading from the N-terminus, the 598-residue chain is Kinetochore-associated protein KNL-2 homolog (598 aa).

The SANTA domain maps to 19-111 (VVLRDWWLIK…IFGFPPCWER (93 aa)). Composition is skewed to basic and acidic residues over residues 335–344 (AKSSKPEKKG) and 371–381 (KSAENKRKIDA). Disordered regions lie at residues 335 to 403 (AKSS…NNAK), 445 to 500 (KESL…EEAE), 520 to 542 (PEKK…QKRS), and 572 to 598 (KDGS…LKIK). The span at 383-392 (KLQSPTSNVA) shows a compositional bias: polar residues. Residues 527–539 (QKTNAASTDSLGQ) show a composition bias toward polar residues. Residues 538 to 572 (GQKRSRSGRVLVSSLEFWRNQIPVYDMDRNLIQVK) are required for localization at centromeres.

This sequence belongs to the KNL2 family. As to expression, expressed in shoot apical meristem, leaf primordia, basal parts of emerging leaves, inflorescence meristems, young inflorescences, developing flower buds, developing sepals and pistils, styles and young siliques.

It is found in the nucleus. The protein resides in the nucleoplasm. Its subcellular location is the nuclear body. It localises to the nucleolus. The protein localises to the chromosome. It is found in the centromere. In terms of biological role, involved in recognition of centromeres and centromeric localization of the centromere-specific histone CENH3. Required for normal progression of mitosis and meiosis. May play a role in the determination of the epigenetic status of centromeres. Binds DNA and RNA in vitro. This is Kinetochore-associated protein KNL-2 homolog from Arabidopsis thaliana (Mouse-ear cress).